Reading from the N-terminus, the 200-residue chain is MVCWLRSRWRPVADNDYRSAPGTEPFVPDFDTGAHSQRFLSLAGQQDRAGKSWPGSTPKPQEDPVGVAPSASVEVLGSEPAATLAHSVTVPGRYTYLKWWKFVLVVLGVWIGAGEVGLSLFYWWYHTLDKTAAVFVVLVYVVACTVGGLILALVPGRPLITALSLGVMSGPFASVAAAAPLYGYYYCERMSHCLVGVIPY.

Residues 47 to 67 (DRAGKSWPGSTPKPQEDPVGV) form a disordered region. A run of 3 helical transmembrane segments spans residues 102–122 (FVLV…SLFY), 134–154 (VFVV…LALV), and 159–179 (LITA…AAAA).

Its subcellular location is the cell membrane. This Mycobacterium tuberculosis (strain ATCC 25618 / H37Rv) protein is Protein Rv0461.